The following is a 151-amino-acid chain: Ribosome maturation factor RimP (151 aa).

This sequence belongs to the RimP family.

Its subcellular location is the cytoplasm. Functionally, required for maturation of 30S ribosomal subunits. The protein is Ribosome maturation factor RimP of Shewanella frigidimarina (strain NCIMB 400).